The chain runs to 547 residues: Elongator complex protein 3 (547 aa).

One can recognise a Radical SAM core domain in the interval 82-372; sequence RTASGIAVVA…YRVQRDIPMP (291 aa). 3 residues coordinate [4Fe-4S] cluster: Cys-99, Cys-109, and Cys-112. Ser-161 bears the Phosphoserine mark. Lys-164 contacts acetyl-CoA. Tyr-202 is modified (phosphotyrosine; by ALK). Lys-229 carries the post-translational modification N6-methyllysine. Phosphotyrosine is present on Tyr-251. The 152-residue stretch at 396 to 547 folds into the N-acetyltransferase domain; sequence IQCRDVRTRE…QGPYMVKMLK (152 aa). Residues 474 to 477, 497 to 499, and Tyr-530 contribute to the acetyl-CoA site; these read ELHV and FGM.

It belongs to the ELP3 family. Component of the elongator complex which consists of ELP1, ELP2, ELP3, ELP4, ELP5 and ELP6. ELP1, ELP2 and ELP3 form the elongator core complex. Interacts with alpha-tubulin. It depends on [4Fe-4S] cluster as a cofactor. Post-translationally, tyrosine-phosphorylated; phosphorylation on Tyr-202 does not affect elongator complex integrity or ELP3 protein stability. Also serine/threonine-phosphorylated. In terms of tissue distribution, expressed in the cerebellum and spinal motor neurons.

Its subcellular location is the cytoplasm. The protein localises to the nucleus. The enzyme catalyses uridine(34) in tRNA + acetyl-CoA + S-adenosyl-L-methionine + H2O = 5-(carboxymethyl)uridine(34) in tRNA + 5'-deoxyadenosine + L-methionine + CoA + 2 H(+). It functions in the pathway tRNA modification; 5-methoxycarbonylmethyl-2-thiouridine-tRNA biosynthesis. Its function is as follows. Catalytic tRNA acetyltransferase subunit of the elongator complex which is required for multiple tRNA modifications, including mcm5U (5-methoxycarbonylmethyl uridine), mcm5s2U (5-methoxycarbonylmethyl-2-thiouridine), and ncm5U (5-carbamoylmethyl uridine). In the elongator complex, acts as a tRNA uridine(34) acetyltransferase by mediating formation of carboxymethyluridine in the wobble base at position 34 in tRNAs. May also act as a protein lysine acetyltransferase by mediating acetylation of target proteins; such activity is however unclear in vivo and recent evidences suggest that ELP3 primarily acts as a tRNA acetyltransferase. Involved in neurogenesis: regulates the migration and branching of projection neurons in the developing cerebral cortex, through a process depending on alpha-tubulin acetylation. Required for acetylation of GJA1 in the developing cerebral cortex. This chain is Elongator complex protein 3, found in Homo sapiens (Human).